A 504-amino-acid polypeptide reads, in one-letter code: Pentatricopeptide repeat-containing protein At5g16640, mitochondrial (504 aa).

Residues 1–43 (MRRSISSKAKSFLHRNLLYSGNSGTSPSSSFSICGFCFSRRAY) constitute a mitochondrion transit peptide. PPR repeat units lie at residues 45 to 79 (NGSD…RPLP), 80 to 114 (SIAD…GIPH), 115 to 149 (NLCT…GHEP), 150 to 184 (SIVT…GYKP), 185 to 219 (NVVI…GIGP), 220 to 254 (DVVT…EIYP), 255 to 289 (DVFT…SLDP), 290 to 324 (DIVT…GCFP), 325 to 359 (DVVT…GVVR), 360 to 394 (NTVT…GVHP), 395 to 429 (NIIT…GMDA), 430 to 464 (DIVT…GLMP), and 465 to 499 (DIWT…GILP).

The protein belongs to the PPR family. P subfamily.

It localises to the mitochondrion. The polypeptide is Pentatricopeptide repeat-containing protein At5g16640, mitochondrial (Arabidopsis thaliana (Mouse-ear cress)).